A 349-amino-acid chain; its full sequence is Alpha-centractin (349 aa).

N-acetylmethionine is present on Met1.

Belongs to the actin family. ARP1 subfamily. As to quaternary structure, part of the ACTR1A/ACTB filament around which the dynactin complex is built. The filament contains 8 copies of ACTR1A and 1 ACTB. Interacts with dynein and adapters such as BICD2. Interacts with BCCIP (isoform 2/alpha).

Its subcellular location is the cytoplasm. It is found in the cytoskeleton. It localises to the microtubule organizing center. The protein resides in the centrosome. The protein localises to the cell cortex. Functionally, part of the ACTR1A/ACTB filament around which the dynactin complex is built. The dynactin multiprotein complex activates the molecular motor dynein for ultra-processive transport along microtubules. In Sus scrofa (Pig), this protein is Alpha-centractin (ACTR1A).